A 331-amino-acid chain; its full sequence is ABSCISIC ACID-INSENSITIVE 5-like protein 1 (331 aa).

Ser40 and Ser98 each carry phosphoserine. Thr143 is subject to Phosphothreonine. Positions 247–310 (MERRQRRMIK…RQEIISRSKQ (64 aa)) constitute a bZIP domain. Residues 249-268 (RRQRRMIKNRESAARSRARR) form a basic motif region. Residues 275-289 (LELELNNLTEENTKL) form a leucine-zipper region. The span at 296-320 (NEKKRRQEIISRSKQVTKEKSGDKL) shows a compositional bias: basic and acidic residues. Residues 296–331 (NEKKRRQEIISRSKQVTKEKSGDKLRKIRRMASAGW) are disordered.

This sequence belongs to the bZIP family. ABI5 subfamily. As to quaternary structure, DNA-binding heterodimer with AREB3/DPBF3 or EEL/DPBF4. Interacts with the AFP proteins AFP1, AFP2 and AFP3. In terms of tissue distribution, predominantly expressed in seeds.

Its subcellular location is the nucleus. Its function is as follows. Could participate in abscisic acid-regulated gene expression during seed development. The protein is ABSCISIC ACID-INSENSITIVE 5-like protein 1 (DPBF2) of Arabidopsis thaliana (Mouse-ear cress).